A 1046-amino-acid chain; its full sequence is UDP-N-acetylglucosamine--peptide N-acetylglucosaminyltransferase 110 kDa subunit (1046 aa).

Alanine 2 is subject to N-acetylalanine. Phosphoserine; by GSK3-beta; alternate is present on residues serine 3 and serine 4. O-linked (GlcNAc) serine; alternate glycans are attached at residues serine 3 and serine 4. At serine 20 the chain carries Phosphoserine. 12 TPR repeats span residues 21–54 (FQGL…EPDN), 89–122 (AEAY…KPDF), 123–156 (IDGY…NPDL), 157–190 (YCVR…QPNF), 191–224 (AVAW…DPNF), 225–258 (LDAY…SPNH), 259–292 (AVVH…QPHF), 293–326 (PDAY…CPTH), 327–360 (ADSL…FPEF), 361–394 (AAAH…SPTF), 395–428 (ADAY…NPAF), and 429–462 (ADAH…KPDF). An O-linked (GlcNAc) serine; by autocatalysis glycan is attached at serine 399. Phosphothreonine is present on threonine 454. A TPR 13; truncated repeat occupies 463–473 (PDAYCNLAHCL). Residues 464–466 (DAY) carry the DFP motif motif. A Nuclear localization signal motif is present at residues 487 to 503 (KKLVSIVAEQLEKNRLP). The Proton acceptor role is filled by histidine 508. Residues glutamine 849, lysine 852, 906-908 (APK), 911-914 (HVRR), 930-932 (HTT), and aspartate 935 each bind UDP. Tyrosine 989 is subject to Phosphotyrosine. Residues 991–1010 (KKIRGKVWKQRISSPLFNTK) form a required for phosphatidylinositol 3,4,5-triphosphate binding region.

Belongs to the glycosyltransferase 41 family. O-GlcNAc transferase subfamily. In terms of assembly, monomer; may exist in different oligomerization states in cells. Homotrimer, oligomerizes via TPR repeats 6 and 7. Trimerization is not necessary for activity in vitro, however it increases affinity for UDP-GlcNAc. Component of a THAP1/THAP3-HCFC1-OGT complex. Component of the NSL complex at least composed of MOF/KAT8, KANSL1, KANSL2, KANSL3, MCRS1, PHF20, OGT1/OGT, WDR5 and HCFC1. Found in a complex with KIF5B, RHOT1, RHOT2 and TRAK1. Found in a complex composed of at least SINHCAF, SIN3A, HDAC1, SAP30, RBBP4, OGT and TET1. Component of a complex composed of KMT2E/MLL5, OGT and USP7; the complex stabilizes KMT2E/MLL5, preventing KMT2E/MLL5 ubiquitination and proteasomal-mediated degradation. Interacts (via TPRs 1-6) with SIN3A; the interaction mediates transcriptional repression in parallel with histone deacetylase. Interacts (via TPR 5-6) with TET1, TET2 and TET3. Interacts (via TPR repeats 6 and 7) with ATXN10. Interacts with NSD2. Interacts with PROSER1; this interaction mediates TET2 O-GlcNAcylation and stability by promoting the interaction between OGT and TET2. Ubiquitinated by the SCF(FBXO31) complex, leading to its proteasomal degradation. In terms of processing, phosphorylation on Ser-3 or Ser-4 by GSK3-beta positively regulates its activity. Phosphorylation at Thr-454 by AMPK promotes nuclear localization. Post-translationally, glycosylated via autocatalysis; O-GlcNAcylation at Ser-399 promotes nuclear localization.

The protein localises to the cytoplasm. It localises to the nucleus. It is found in the cell membrane. The protein resides in the mitochondrion membrane. Its subcellular location is the cell projection. The catalysed reaction is L-seryl-[protein] + UDP-N-acetyl-alpha-D-glucosamine = 3-O-(N-acetyl-beta-D-glucosaminyl)-L-seryl-[protein] + UDP + H(+). It carries out the reaction L-threonyl-[protein] + UDP-N-acetyl-alpha-D-glucosamine = 3-O-(N-acetyl-beta-D-glucosaminyl)-L-threonyl-[protein] + UDP + H(+). The protein operates within protein modification; protein glycosylation. With respect to regulation, subject to product inhibition by UDP. Functionally, catalyzes the transfer of a single N-acetylglucosamine from UDP-GlcNAc to a serine or threonine residue in cytoplasmic and nuclear proteins resulting in their modification with a beta-linked N-acetylglucosamine (O-GlcNAc). Glycosylates a large and diverse number of proteins including histone H2B, AKT1, AMPK, ATG4B, CAPRIN1, EZH2, FNIP1, GSDMD, KRT7, LMNA, LMNB1, LMNB2, RPTOR, HOXA1, PFKL, KMT2E/MLL5, MAPT/TAU, TET2, RBL2, RET, NOD2 and HCFC1. Can regulate their cellular processes via cross-talk between glycosylation and phosphorylation or by affecting proteolytic processing. Involved in insulin resistance in muscle and adipocyte cells via glycosylating insulin signaling components and inhibiting the 'Thr-308' phosphorylation of AKT1, enhancing IRS1 phosphorylation and attenuating insulin signaling. Involved in glycolysis regulation by mediating glycosylation of 6-phosphofructokinase PFKL, inhibiting its activity. Plays a key role in chromatin structure by mediating O-GlcNAcylation of 'Ser-112' of histone H2B: recruited to CpG-rich transcription start sites of active genes via its interaction with TET proteins (TET1, TET2 or TET3). As part of the NSL complex indirectly involved in acetylation of nucleosomal histone H4 on several lysine residues. O-GlcNAcylation of 'Ser-75' of EZH2 increases its stability, and facilitating the formation of H3K27me3 by the PRC2/EED-EZH2 complex. Stabilizes KMT2E/MLL5 by mediating its glycosylation, thereby preventing KMT2E/MLL5 ubiquitination. Regulates circadian oscillation of the clock genes and glucose homeostasis in the liver. Stabilizes clock proteins BMAL1 and CLOCK through O-glycosylation, which prevents their ubiquitination and subsequent degradation. Promotes the CLOCK-BMAL1-mediated transcription of genes in the negative loop of the circadian clock such as PER1/2 and CRY1/2. O-glycosylates HCFC1 and regulates its proteolytic processing and transcriptional activity. Component of a THAP1/THAP3-HCFC1-OGT complex that is required for the regulation of the transcriptional activity of RRM1. Regulates mitochondrial motility in neurons by mediating glycosylation of TRAK1. Promotes autophagy by mediating O-glycosylation of ATG4B. Acts as a regulator of mTORC1 signaling by mediating O-glycosylation of RPTOR and FNIP1: O-GlcNAcylation of RPTOR in response to glucose sufficiency promotes activation of the mTORC1 complex. The chain is UDP-N-acetylglucosamine--peptide N-acetylglucosaminyltransferase 110 kDa subunit (Ogt) from Mus musculus (Mouse).